The following is an 893-amino-acid chain: Phosphatidate phosphatase LPIN2 (893 aa).

The tract at residues 1-108 (MNYVGQLAGQ…LPAYLATSPI (108 aa)) is N-LIP. Ser-106 carries the post-translational modification Phosphoserine. The segment at 122–216 (LVKSSGNERP…EDYKEPSLFH (95 aa)) is disordered. Over residues 123-151 (VKSSGNERPAQSSDVSHTLESEAVFTQSS) the composition is skewed to polar residues. Over residues 152–162 (VKKKKRRRKKC) the composition is skewed to basic residues. A Nuclear localization signal motif is present at residues 153–158 (KKKKRR). Residues Ser-174, Ser-186, and Ser-187 each carry the phosphoserine modification. A compositionally biased stretch (basic and acidic residues) spans 204 to 213 (LKEEDYKEPS). Residues Ser-243 and Ser-303 each carry the phosphoserine modification. 2 disordered regions span residues 357-400 (LLDA…PDDI) and 417-456 (FPKS…TECL). Residues 360 to 371 (ADPVPSPSAEAP) are compositionally biased toward low complexity. A compositionally biased stretch (basic residues) spans 384 to 393 (KKKGVHKRSQ). Polar residues predominate over residues 423-445 (DPGSRQWPESDTFSGSQSPQSVG). A Phosphoserine modification is found at Ser-563. A disordered region spans residues 568 to 611 (LPETKEGKSEVPPANDLPSNAEEPTSARPAENDTSSDEGSQELE). Over residues 601–611 (TSSDEGSQELE) the composition is skewed to acidic residues. The tract at residues 632–834 (YKKSLRLSSD…RIFTVNPKGE (203 aa)) is C-LIP. The DXDXT motif signature appears at 686 to 690 (DIDGT). The short motif at 697–701 (LGQIL) is the LXXIL motif element.

Belongs to the lipin family. The cofactor is Mg(2+). In terms of tissue distribution, expressed at high level in liver and to some extend in lung, kidney, placenta, spleen, thymus, lymph node, prostate, testes, small intestine, and colon. Expressed also in circulating red blood cells and site of lymphopoiesis.

The protein resides in the nucleus. It localises to the cytoplasm. The protein localises to the cytosol. It is found in the endoplasmic reticulum membrane. The enzyme catalyses a 1,2-diacyl-sn-glycero-3-phosphate + H2O = a 1,2-diacyl-sn-glycerol + phosphate. Its activity is regulated as follows. Inhibited by N-ethylmaleimide. Its function is as follows. Acts as a magnesium-dependent phosphatidate phosphatase enzyme which catalyzes the conversion of phosphatidic acid to diacylglycerol during triglyceride, phosphatidylcholine and phosphatidylethanolamine biosynthesis in the endoplasmic reticulum membrane. Plays important roles in controlling the metabolism of fatty acids at different levels. Also acts as a nuclear transcriptional coactivator for PPARGC1A to modulate lipid metabolism. In Mus musculus (Mouse), this protein is Phosphatidate phosphatase LPIN2.